The primary structure comprises 736 residues: DNA topoisomerase 4 subunit A (736 aa).

Positions 32-496 constitute a Topo IIA-type catalytic domain; sequence LPDVRDGLKP…SFEQVTLTNQ (465 aa). Tyr-120 acts as the O-(5'-phospho-DNA)-tyrosine intermediate in catalysis.

The protein belongs to the type II topoisomerase GyrA/ParC subunit family. ParC type 1 subfamily. In terms of assembly, heterotetramer composed of ParC and ParE.

It is found in the cell membrane. It carries out the reaction ATP-dependent breakage, passage and rejoining of double-stranded DNA.. Functionally, topoisomerase IV is essential for chromosome segregation. It relaxes supercoiled DNA. Performs the decatenation events required during the replication of a circular DNA molecule. The sequence is that of DNA topoisomerase 4 subunit A from Rickettsia bellii (strain RML369-C).